A 135-amino-acid polypeptide reads, in one-letter code: Translation initiation factor 2 subunit beta (135 aa).

This sequence belongs to the eIF-2-beta/eIF-5 family. In terms of assembly, heterotrimer composed of an alpha, a beta and a gamma chain.

In terms of biological role, eIF-2 functions in the early steps of protein synthesis by forming a ternary complex with GTP and initiator tRNA. This chain is Translation initiation factor 2 subunit beta (eif2b), found in Methanothermobacter thermautotrophicus (strain ATCC 29096 / DSM 1053 / JCM 10044 / NBRC 100330 / Delta H) (Methanobacterium thermoautotrophicum).